The chain runs to 1374 residues: DNA-directed RNA polymerase subunit beta (1374 aa).

The protein belongs to the RNA polymerase beta chain family. In terms of assembly, the RNAP catalytic core consists of 2 alpha, 1 beta, 1 beta' and 1 omega subunit. When a sigma factor is associated with the core the holoenzyme is formed, which can initiate transcription.

The enzyme catalyses RNA(n) + a ribonucleoside 5'-triphosphate = RNA(n+1) + diphosphate. Functionally, DNA-dependent RNA polymerase catalyzes the transcription of DNA into RNA using the four ribonucleoside triphosphates as substrates. This Rickettsia prowazekii (strain Madrid E) protein is DNA-directed RNA polymerase subunit beta.